The sequence spans 157 residues: Hydra actinoporin-like toxin 3 (157 aa).

A signal peptide spans 1–14; sequence LEATVSRNKKYKFT. Positions 129 to 131 match the Cell attachment site motif; the sequence is IAG.

The protein belongs to the actinoporin family. HALT subfamily. As to quaternary structure, octamer or nonamer in membranes. Monomer in the soluble state. In vitro, interacts with folate receptor alpha (of target organism).

It is found in the nematocyst. Its subcellular location is the secreted. The protein localises to the target cell membrane. Pore-forming protein that forms hydrophilic pores and causes cytolysis. Compared to equinatoxin-2 (AC P61914), it reveals lower cytolysis activity (5-12-fold difference, tested on erythrocytes), a larger pore size (probably 2-3 nm) and different affinity to membrane lipids (100-fold lower affinity to sphingomyelin). Binds to the two sphingolipids, lysophosphatidic acid (LPA) and sphingosine-1-phosphate (S1P). Does not bind (or only weakly) to sulfatides (SFT). Shows cytolytic activity on HeLa cells, with a different potency than its paralogs (from most potent to less potent: HALT-4&gt;HALT-6~HALT-1&gt;HALT-3&gt;HALT-7&gt;HALT-2). Pore formation is a multi-step process that involves specific recognition of membrane lipid by a protein aromatic residues rich region, firm binding to the membrane (mainly driven by hydrophobic interactions) accompanied by the transfer of the N-terminal region to the lipid-water interface and finally pore formation after oligomerization of monomers. In vitro, binds to the folate receptor alpha (FOLR1), a GPI-anchored membrane protein that plays a major role in the uptake of folate/folic acid into cells via endocytosis, suggesting a possible involvement of this receptor in the mechanism of HALT-1-induced cell lysis. In vivo, does not cause visible paralysis in larvae of the blowfly Sarcophaga faculata, the most common arthropod prey of Hydra. In Hydra vulgaris (Hydra), this protein is Hydra actinoporin-like toxin 3.